The chain runs to 578 residues: Translation initiation factor eIF2B subunit gamma (578 aa).

A phosphoserine mark is found at S296 and S300. Disordered stretches follow at residues 298-337 (QASF…SATS) and 535-578 (DDSV…LFER). Residue T306 is modified to Phosphothreonine. The span at 544–578 (EIAEETDSDDRSDEDSDDSEYTDEYEYEDDGLFER) shows a compositional bias: acidic residues.

The protein belongs to the eIF-2B gamma/epsilon subunits family. As to quaternary structure, component of the translation initiation factor 2B (eIF2B) complex which is a heterodecamer of two sets of five different subunits: alpha, beta, gamma, delta and epsilon. Subunits alpha, beta and delta comprise a regulatory subcomplex and subunits epsilon and gamma comprise a catalytic subcomplex. Within the complex, the hexameric regulatory complex resides at the center, with the two heterodimeric catalytic subcomplexes bound on opposite sides.

It localises to the cytoplasm. It is found in the cytosol. Acts as a component of the translation initiation factor 2B (eIF2B) complex, which catalyzes the exchange of GDP for GTP on the eukaryotic initiation factor 2 (eIF2) complex gamma subunit. Its guanine nucleotide exchange factor activity is repressed when bound to eIF2 complex phosphorylated on the alpha subunit, thereby limiting the amount of methionyl-initiator methionine tRNA available to the ribosome and consequently global translation is repressed. It activates the synthesis of GCN4 in yeast under amino acid starvation conditions by suppressing the inhibitory effects of multiple AUG codons present in the leader of GCN4 mRNA. It may promote either repression or activation of GCN4 expression depending on amino acid availability. GCD1 stabilizes the interaction between eIF2 and GCD6 and stimulates the catalytic activity in vitro. This is Translation initiation factor eIF2B subunit gamma (GCD1) from Saccharomyces cerevisiae (strain ATCC 204508 / S288c) (Baker's yeast).